Reading from the N-terminus, the 246-residue chain is tRNA (guanine-N(1)-)-methyltransferase (246 aa).

S-adenosyl-L-methionine-binding positions include G113 and 133 to 138 (IGDYVL).

Belongs to the RNA methyltransferase TrmD family. Homodimer.

The protein resides in the cytoplasm. It carries out the reaction guanosine(37) in tRNA + S-adenosyl-L-methionine = N(1)-methylguanosine(37) in tRNA + S-adenosyl-L-homocysteine + H(+). Specifically methylates guanosine-37 in various tRNAs. The polypeptide is tRNA (guanine-N(1)-)-methyltransferase (Yersinia pseudotuberculosis serotype O:1b (strain IP 31758)).